Consider the following 261-residue polypeptide: Cytochrome c oxidase subunit 3 (261 aa).

Residues 1-15 (MTHQTHAYHTVNPSP) are Mitochondrial matrix-facing. The helical transmembrane segment at 16 to 34 (WPLTGALSALLMTSGLIMW) threads the bilayer. Residues 35–40 (FHFNSP) lie on the Mitochondrial intermembrane side of the membrane. The chain crosses the membrane as a helical span at residues 41 to 66 (LLLVLGLTTNFLTMYQWWRDIIREST). Over 67 to 72 (FQGHHT) the chain is Mitochondrial matrix. The helical transmembrane segment at 73 to 105 (TIVQKGLRYGMILFIVSEVFFFAGFFWAFYHSS) threads the bilayer. Topologically, residues 106–128 (LAPTPELGGCWPPTGINPLNPLE) are mitochondrial intermembrane. A helical membrane pass occupies residues 129–152 (VPLLNTSVLLASGVSITWAHHSLM). At 153–155 (EGH) the chain is on the mitochondrial matrix side. The chain crosses the membrane as a helical span at residues 156-183 (RKHMLQALFITIALGVYFTLLQASEYYE). Over 184 to 190 (APFTISD) the chain is Mitochondrial intermembrane. A helical membrane pass occupies residues 191–223 (GIYGSTFFVATGFHGLHVIIGSSFLIVCFMRQL). The Mitochondrial matrix segment spans residues 224–232 (KFHFTSSHH). The helical transmembrane segment at 233–256 (FGFEAAAWYWHFVDVVWLFLYVSI) threads the bilayer. Topologically, residues 257 to 261 (YWWGS) are mitochondrial intermembrane.

The protein belongs to the cytochrome c oxidase subunit 3 family. As to quaternary structure, component of the cytochrome c oxidase (complex IV, CIV), a multisubunit enzyme composed of 14 subunits. The complex is composed of a catalytic core of 3 subunits MT-CO1, MT-CO2 and MT-CO3, encoded in the mitochondrial DNA, and 11 supernumerary subunits COX4I, COX5A, COX5B, COX6A, COX6B, COX6C, COX7A, COX7B, COX7C, COX8 and NDUFA4, which are encoded in the nuclear genome. The complex exists as a monomer or a dimer and forms supercomplexes (SCs) in the inner mitochondrial membrane with NADH-ubiquinone oxidoreductase (complex I, CI) and ubiquinol-cytochrome c oxidoreductase (cytochrome b-c1 complex, complex III, CIII), resulting in different assemblies (supercomplex SCI(1)III(2)IV(1) and megacomplex MCI(2)III(2)IV(2)).

The protein localises to the mitochondrion inner membrane. It carries out the reaction 4 Fe(II)-[cytochrome c] + O2 + 8 H(+)(in) = 4 Fe(III)-[cytochrome c] + 2 H2O + 4 H(+)(out). Functionally, component of the cytochrome c oxidase, the last enzyme in the mitochondrial electron transport chain which drives oxidative phosphorylation. The respiratory chain contains 3 multisubunit complexes succinate dehydrogenase (complex II, CII), ubiquinol-cytochrome c oxidoreductase (cytochrome b-c1 complex, complex III, CIII) and cytochrome c oxidase (complex IV, CIV), that cooperate to transfer electrons derived from NADH and succinate to molecular oxygen, creating an electrochemical gradient over the inner membrane that drives transmembrane transport and the ATP synthase. Cytochrome c oxidase is the component of the respiratory chain that catalyzes the reduction of oxygen to water. Electrons originating from reduced cytochrome c in the intermembrane space (IMS) are transferred via the dinuclear copper A center (CU(A)) of subunit 2 and heme A of subunit 1 to the active site in subunit 1, a binuclear center (BNC) formed by heme A3 and copper B (CU(B)). The BNC reduces molecular oxygen to 2 water molecules using 4 electrons from cytochrome c in the IMS and 4 protons from the mitochondrial matrix. This Dasypus novemcinctus (Nine-banded armadillo) protein is Cytochrome c oxidase subunit 3 (MT-CO3).